Consider the following 679-residue polypeptide: ATP-dependent zinc metalloprotease FtsH (679 aa).

Over 1–6 the chain is Cytoplasmic; that stretch reads MNRIFR. The helical transmembrane segment at 7 to 27 threads the bilayer; it reads NTIFYLLIFLVIVGIVSVFNS. The Extracellular segment spans residues 28 to 114; sequence DQTETENVSF…IEPADETSGW (87 aa). The helical transmembrane segment at 115-135 threads the bilayer; the sequence is VQFFTGIIPFIIIFILFFFLL. Over 136–679 the chain is Cytoplasmic; the sequence is SQAQGGGSRV…SFEDDTNKKE (544 aa). 206–213 provides a ligand contact to ATP; that stretch reads GPPGTGKT. A Zn(2+)-binding site is contributed by His-428. Glu-429 is a catalytic residue. Residues His-432 and Asp-504 each contribute to the Zn(2+) site. Composition is skewed to basic and acidic residues over residues 621 to 642 and 658 to 679; these read LEKE…KEET and PIEK…NKKE. A disordered region spans residues 621-679; sequence LEKEKASESDVKVNINSKKEETPQVEAEQPQEPNTDEPIEKDPSVEDNRSFEDDTNKKE.

The protein in the central section; belongs to the AAA ATPase family. In the C-terminal section; belongs to the peptidase M41 family. As to quaternary structure, homohexamer. Zn(2+) is required as a cofactor.

Its subcellular location is the cell membrane. In terms of biological role, acts as a processive, ATP-dependent zinc metallopeptidase for both cytoplasmic and membrane proteins. Plays a role in the quality control of integral membrane proteins. The sequence is that of ATP-dependent zinc metalloprotease FtsH from Alkalihalophilus pseudofirmus (strain ATCC BAA-2126 / JCM 17055 / OF4) (Bacillus pseudofirmus).